The following is a 697-amino-acid chain: MSHFLFEIGFEEMPARFLPGLVDEVKKLFAEGLTQAKVDCGTIAAFATPRRLVVSVPDLAAAARREEEVVSGPPEKVGFDAAGAPTKAAEGFAKGQGLDVSAVFVMDTPKGRYLALRKTTGGEAAIELLPALCLEAVKKLSFPKRMRWGSREFAFGRPVHWFLALLDDAVVPFQFDDITSGRATYGQRIMGPGPFEVPTAAAYFDIIRDKGKVVLDAREREGIVRSQAEALAKEAGGTAVINPALLAEVTGLTEHPVVLLGRFDPKFLDVPREVLITSMESHQKSFAVEDGKGGLLPVFLTTLGLVPGNVELVRRGWQRVLTARLEDARFFWEADLSASLETWQKKLENVVFLAGLGSMRDKGKRLERLCGLIAEQAGKPEIMLEASQAGGLAKVDLVSDMVGEFAELQGIMGGIYSRRKGQSKTASRAVAEQYLPAGPDSPVPATLAGAILSIADKADTLAGCFGLDMAPTGAADPYALRRAALGICRVVIEHGLRLDLMELLQGAIDGYGEVKFKVDRTHVLAKLLDFFGQRLKAYFTGQGYDTLVVEAALGASYTDIAALSARLSALAGFAAKPDFDQAVLTFKRAANIIRKQGVGAGVPLTGAVKAALLEEQAEKDLAAVCQDVFPRFDALFDAGDYGAVLELLYELRPSVDAFFDNVMVMCDDMDMRLNRLNLLKSLVDRLGRVADFAALQV.

The protein belongs to the class-II aminoacyl-tRNA synthetase family. In terms of assembly, tetramer of two alpha and two beta subunits.

It is found in the cytoplasm. It carries out the reaction tRNA(Gly) + glycine + ATP = glycyl-tRNA(Gly) + AMP + diphosphate. The sequence is that of Glycine--tRNA ligase beta subunit from Solidesulfovibrio magneticus (strain ATCC 700980 / DSM 13731 / RS-1) (Desulfovibrio magneticus).